The sequence spans 449 residues: Ribosomal protein uS12 methylthiotransferase RimO (449 aa).

The MTTase N-terminal domain occupies 15-125; the sequence is PRISFVSLGC…VLAAVHEAVP (111 aa). Cys-24, Cys-60, Cys-89, Cys-156, Cys-160, and Cys-163 together coordinate [4Fe-4S] cluster. The region spanning 142-379 is the Radical SAM core domain; that stretch reads LTPRHYAYLK…MRTQQKVSAR (238 aa). Positions 382 to 448 constitute a TRAM domain; that stretch reads KRKVGTRQSV…PYDLSGTAVG (67 aa).

This sequence belongs to the methylthiotransferase family. RimO subfamily. The cofactor is [4Fe-4S] cluster.

The protein resides in the cytoplasm. It catalyses the reaction L-aspartate(89)-[ribosomal protein uS12]-hydrogen + (sulfur carrier)-SH + AH2 + 2 S-adenosyl-L-methionine = 3-methylsulfanyl-L-aspartate(89)-[ribosomal protein uS12]-hydrogen + (sulfur carrier)-H + 5'-deoxyadenosine + L-methionine + A + S-adenosyl-L-homocysteine + 2 H(+). Functionally, catalyzes the methylthiolation of an aspartic acid residue of ribosomal protein uS12. This chain is Ribosomal protein uS12 methylthiotransferase RimO, found in Xanthobacter autotrophicus (strain ATCC BAA-1158 / Py2).